The following is a 277-amino-acid chain: Large ribosomal subunit protein uL2 (277 aa).

Disordered stretches follow at residues 35–58 and 213–277; these read QPLP…GGGH and WKGI…RKRK.

Belongs to the universal ribosomal protein uL2 family. As to quaternary structure, part of the 50S ribosomal subunit. Forms a bridge to the 30S subunit in the 70S ribosome.

Its function is as follows. One of the primary rRNA binding proteins. Required for association of the 30S and 50S subunits to form the 70S ribosome, for tRNA binding and peptide bond formation. It has been suggested to have peptidyltransferase activity; this is somewhat controversial. Makes several contacts with the 16S rRNA in the 70S ribosome. This chain is Large ribosomal subunit protein uL2, found in Staphylococcus carnosus (strain TM300).